Reading from the N-terminus, the 334-residue chain is L-lactate dehydrogenase A chain (334 aa).

NAD(+)-binding positions include 30–58 (GQVGMACAVSVLLKELADELALVDILEDK) and R100. Positions 107, 139, and 170 each coordinate substrate. An NAD(+)-binding site is contributed by N139. Catalysis depends on H194, which acts as the Proton acceptor. Residue T249 coordinates substrate.

Belongs to the LDH/MDH superfamily. LDH family. In terms of assembly, homotetramer.

The protein resides in the cytoplasm. The catalysed reaction is (S)-lactate + NAD(+) = pyruvate + NADH + H(+). It participates in fermentation; pyruvate fermentation to lactate; (S)-lactate from pyruvate: step 1/1. Its function is as follows. Interconverts simultaneously and stereospecifically pyruvate and lactate with concomitant interconversion of NADH and NAD(+). The protein is L-lactate dehydrogenase A chain (ldha) of Xenopus laevis (African clawed frog).